The chain runs to 1415 residues: DNA-directed RNA polymerase subunit beta' (1415 aa).

Residues Cys70, Cys72, Cys85, and Cys88 each coordinate Zn(2+). Residues Asp461, Asp463, and Asp465 each contribute to the Mg(2+) site. The Zn(2+) site is built by Cys820, Cys894, Cys901, and Cys904. Residues 1382–1415 (ERERAQAIADEEQSLFIEPPPVVQATTEGEGDNA) form a disordered region.

It belongs to the RNA polymerase beta' chain family. The RNAP catalytic core consists of 2 alpha, 1 beta, 1 beta' and 1 omega subunit. When a sigma factor is associated with the core the holoenzyme is formed, which can initiate transcription. Mg(2+) serves as cofactor. Zn(2+) is required as a cofactor.

The enzyme catalyses RNA(n) + a ribonucleoside 5'-triphosphate = RNA(n+1) + diphosphate. DNA-dependent RNA polymerase catalyzes the transcription of DNA into RNA using the four ribonucleoside triphosphates as substrates. The sequence is that of DNA-directed RNA polymerase subunit beta' from Cupriavidus pinatubonensis (strain JMP 134 / LMG 1197) (Cupriavidus necator (strain JMP 134)).